Here is a 224-residue protein sequence, read N- to C-terminus: Ribose-5-phosphate isomerase A (224 aa).

Residues 32–35, 85–88, and 98–101 each bind substrate; these read TGST, DGAD, and KGGG. The active-site Proton acceptor is E107. K125 provides a ligand contact to substrate.

Belongs to the ribose 5-phosphate isomerase family. As to quaternary structure, homodimer.

It catalyses the reaction aldehydo-D-ribose 5-phosphate = D-ribulose 5-phosphate. It participates in carbohydrate degradation; pentose phosphate pathway; D-ribose 5-phosphate from D-ribulose 5-phosphate (non-oxidative stage): step 1/1. Its function is as follows. Catalyzes the reversible conversion of ribose-5-phosphate to ribulose 5-phosphate. This is Ribose-5-phosphate isomerase A from Pseudomonas entomophila (strain L48).